The chain runs to 266 residues: Apolipoprotein A-I (266 aa).

Residues M1–A18 form the signal peptide. A run of 2 repeats spans residues L67–G88 and P89–S110. Residues L67–Q266 are 10 X approximate tandem repeats. The residue at position 109 (M109) is a Methionine sulfoxide. Residues K111–Q121 form a 3; half-length repeat. Tandem repeats lie at residues P122–A143, P144–S165, P166–A187, P188–G209, and A210–R231. One copy of the 9; half-length repeat lies at P232 to L242. Residues P243 to Q266 form repeat 10.

Belongs to the apolipoprotein A1/A4/E family. In terms of assembly, homodimer. Interacts with APOA1BP and CLU. Component of a sperm activating protein complex (SPAP), consisting of APOA1, an immunoglobulin heavy chain, an immunoglobulin light chain and albumin. Interacts with NDRG1. Interacts with SCGB3A2. Interacts with NAXE and YJEFN3. In terms of processing, palmitoylated. Post-translationally, glycosylated. Phosphorylation sites are present in the extracellular medium. As to expression, major protein of plasma HDL, also found in chylomicrons. Synthesized in the liver and small intestine.

It is found in the secreted. Participates in the reverse transport of cholesterol from tissues to the liver for excretion by promoting cholesterol efflux from tissues and by acting as a cofactor for the lecithin cholesterol acyltransferase (LCAT). As part of the SPAP complex, activates spermatozoa motility. In Canis lupus familiaris (Dog), this protein is Apolipoprotein A-I (APOA1).